Here is a 235-residue protein sequence, read N- to C-terminus: Glycerol uptake facilitator protein 2 (235 aa).

6 consecutive transmembrane segments (helical) span residues 4-24, 39-59, 62-82, 83-103, 134-154, and 165-185; these read FLGE…SGAA, FICL…GQFG, GHLN…PMAN, VWPY…IVII, VFNF…LLNL, and MVGL…GFAI. Residues 65 to 67 carry the NPA 1 motif; that stretch reads NPA. An NPA 2 motif is present at residues 186–188; sequence NPA. A helical membrane pass occupies residues 210-230; sequence WGYAWVPMFGPLLGGILAAGL.

Belongs to the MIP/aquaporin (TC 1.A.8) family.

It is found in the cell membrane. In terms of biological role, transporter that facilitates the transmembrane diffusion of water, dihydroxyacetone, glycerol and H(2)O(2). Is not permeable to urea and D/L-lactic acid. The polypeptide is Glycerol uptake facilitator protein 2 (Lactiplantibacillus plantarum (strain ATCC BAA-793 / NCIMB 8826 / WCFS1) (Lactobacillus plantarum)).